The sequence spans 241 residues: Alkylated DNA repair protein ALKBH6 homolog (241 aa).

The Fe2OG dioxygenase domain occupies 87–232 (AINHVLINEY…RVSLTCRLVP (146 aa)). 3 residues coordinate Fe cation: His105, Asp107, and His181. Positions 223 and 229 each coordinate 2-oxoglutarate.

Belongs to the alkB family. Fe(2+) is required as a cofactor.

The protein resides in the nucleus. Probable RNA demethylase that binds to both N6-methyladenosine-containing- (m(6)A) and C5-methylcytidine-containing- (m(5)C) RNAs, thus being a probable m(6)A and m(5)C eraser. Involved in responses to abscisic acid (ABA) via the modulation of the expression of ABA signaling-related genes (e.g. ABI3 and ABI4). Acts as a negative regulator during seed germination under abiotic stresses (e.g. salt, cold and ABA). Positive modulator of seedling growth and survival in response to drought and heat, but counteracts tolerance to salt. The protein is Alkylated DNA repair protein ALKBH6 homolog of Arabidopsis thaliana (Mouse-ear cress).